Consider the following 709-residue polypeptide: Elongation factor G (709 aa).

The tr-type G domain maps to 6 to 295 (KFLRNIGIMA…AVCTYLPSPL (290 aa)). GTP contacts are provided by residues 15–22 (AHIDAGKT), 92–96 (DTPGH), and 146–149 (NKMD).

The protein belongs to the TRAFAC class translation factor GTPase superfamily. Classic translation factor GTPase family. EF-G/EF-2 subfamily.

The protein resides in the cytoplasm. Catalyzes the GTP-dependent ribosomal translocation step during translation elongation. During this step, the ribosome changes from the pre-translocational (PRE) to the post-translocational (POST) state as the newly formed A-site-bound peptidyl-tRNA and P-site-bound deacylated tRNA move to the P and E sites, respectively. Catalyzes the coordinated movement of the two tRNA molecules, the mRNA and conformational changes in the ribosome. This is Elongation factor G from Amoebophilus asiaticus (strain 5a2).